Here is a 1216-residue protein sequence, read N- to C-terminus: Protein WWC3 (1216 aa).

The disordered stretch occupies residues Met1 to Ala63. The segment covering Glu21–Pro51 has biased composition (pro residues). WW domains follow at residues Leu59–Asp92 and Asp106–Glu139. 2 coiled-coil regions span residues Lys164 to Glu250 and Asp354 to Arg468. Disordered regions lie at residues Val487–Gly508, Gly546–Cys612, and Asp634–Thr668. Low complexity predominate over residues Pro570–Pro598. The 126-residue stretch at Ser722–His847 folds into the C2 domain. Residues Asp885–Ser936 adopt a coiled-coil conformation. The tract at residues Ser1060 to Arg1079 is interaction with PRKCZ. Residues Leu1091–Tyr1160 are a coiled coil.

Belongs to the WWC family. As to quaternary structure, forms homodimers and heterodimers with WWC1 and WWC2. Interacts with DLC1 and PRKCZ. Interacts (via WW domains) with LATS1 and LATS2.

The protein resides in the cytoplasm. Its subcellular location is the cytosol. In terms of biological role, regulator of the Hippo signaling pathway, also known as the Salvador-Warts-Hippo (SWH) pathway. Enhances phosphorylation of LATS1 and YAP1 and negatively regulates cell proliferation and organ growth due to a suppression of the transcriptional activity of YAP1, the major effector of the Hippo pathway. The sequence is that of Protein WWC3 from Homo sapiens (Human).